The sequence spans 492 residues: Glutamyl-tRNA(Gln) amidotransferase subunit A (492 aa).

Residues Lys78 and Ser158 each act as charge relay system in the active site. The active-site Acyl-ester intermediate is Ser182.

This sequence belongs to the amidase family. GatA subfamily. Heterotrimer of A, B and C subunits.

It catalyses the reaction L-glutamyl-tRNA(Gln) + L-glutamine + ATP + H2O = L-glutaminyl-tRNA(Gln) + L-glutamate + ADP + phosphate + H(+). Functionally, allows the formation of correctly charged Gln-tRNA(Gln) through the transamidation of misacylated Glu-tRNA(Gln) in organisms which lack glutaminyl-tRNA synthetase. The reaction takes place in the presence of glutamine and ATP through an activated gamma-phospho-Glu-tRNA(Gln). The sequence is that of Glutamyl-tRNA(Gln) amidotransferase subunit A from Rhodopseudomonas palustris (strain BisA53).